Reading from the N-terminus, the 216-residue chain is Probable phosphatase SPAC513.02 (216 aa).

His-15 functions as the Tele-phosphohistidine intermediate in the catalytic mechanism.

This sequence belongs to the phosphoglycerate mutase family. BPG-dependent PGAM subfamily.

The protein resides in the cytoplasm. It is found in the nucleus. The protein is Probable phosphatase SPAC513.02 of Schizosaccharomyces pombe (strain 972 / ATCC 24843) (Fission yeast).